The primary structure comprises 369 residues: Flagellar P-ring protein (369 aa).

An N-terminal signal peptide occupies residues 1-23 (MRSLLRWMGVLLLCGLCAAPAQA).

Belongs to the FlgI family. The basal body constitutes a major portion of the flagellar organelle and consists of four rings (L,P,S, and M) mounted on a central rod.

The protein localises to the periplasm. It is found in the bacterial flagellum basal body. Its function is as follows. Assembles around the rod to form the L-ring and probably protects the motor/basal body from shearing forces during rotation. This chain is Flagellar P-ring protein, found in Chromohalobacter salexigens (strain ATCC BAA-138 / DSM 3043 / CIP 106854 / NCIMB 13768 / 1H11).